A 123-amino-acid polypeptide reads, in one-letter code: Small ribosomal subunit protein uS12 (123 aa).

D89 carries the post-translational modification 3-methylthioaspartic acid.

It belongs to the universal ribosomal protein uS12 family. As to quaternary structure, part of the 30S ribosomal subunit. Contacts proteins S8 and S17. May interact with IF1 in the 30S initiation complex.

In terms of biological role, with S4 and S5 plays an important role in translational accuracy. Interacts with and stabilizes bases of the 16S rRNA that are involved in tRNA selection in the A site and with the mRNA backbone. Located at the interface of the 30S and 50S subunits, it traverses the body of the 30S subunit contacting proteins on the other side and probably holding the rRNA structure together. The combined cluster of proteins S8, S12 and S17 appears to hold together the shoulder and platform of the 30S subunit. This is Small ribosomal subunit protein uS12 from Orientia tsutsugamushi (strain Ikeda) (Rickettsia tsutsugamushi).